We begin with the raw amino-acid sequence, 129 residues long: Fluoride-specific ion channel FluC (129 aa).

4 helical membrane passes run 6 to 26, 35 to 55, 73 to 93, and 98 to 118; these read ILAI…FNGI, IPFG…ILIA, TGVL…FLLL, and IALA…MAGG. 2 residues coordinate Na(+): Gly-77 and Thr-80.

Belongs to the fluoride channel Fluc/FEX (TC 1.A.43) family.

The protein localises to the cell inner membrane. The catalysed reaction is fluoride(in) = fluoride(out). With respect to regulation, na(+) is not transported, but it plays an essential structural role and its presence is essential for fluoride channel function. Fluoride-specific ion channel. Important for reducing fluoride concentration in the cell, thus reducing its toxicity. The protein is Fluoride-specific ion channel FluC of Sulfurimonas denitrificans (strain ATCC 33889 / DSM 1251) (Thiomicrospira denitrificans (strain ATCC 33889 / DSM 1251)).